A 200-amino-acid polypeptide reads, in one-letter code: Ribonuclease HII (200 aa).

Positions 10 to 200 constitute an RNase H type-2 domain; the sequence is LIEAGCDEAG…LGDGQLNLNF (191 aa). Positions 16, 17, and 108 each coordinate a divalent metal cation.

The protein belongs to the RNase HII family. The cofactor is Mn(2+). Requires Mg(2+) as cofactor.

The protein localises to the cytoplasm. The catalysed reaction is Endonucleolytic cleavage to 5'-phosphomonoester.. In terms of biological role, endonuclease that specifically degrades the RNA of RNA-DNA hybrids. This Bacteroides thetaiotaomicron (strain ATCC 29148 / DSM 2079 / JCM 5827 / CCUG 10774 / NCTC 10582 / VPI-5482 / E50) protein is Ribonuclease HII.